The primary structure comprises 459 residues: Transcription factor 7-like 2 (459 aa).

Positions 1-11 (MPQLNGGGGDD) are enriched in gly residues. Positions 1–53 (MPQLNGGGGDDLGANDELISFKDEGEQEEKNSENSSAERDLADVKSSLVNESE) are CTNNB1-binding. The disordered stretch occupies residues 1 to 96 (MPQLNGGGGD…AKRQDGGLFK (96 aa)). Basic and acidic residues predominate over residues 19–43 (ISFKDEGEQEEKNSENSSAERDLAD). Residue Lys22 forms a Glycyl lysine isopeptide (Lys-Gly) (interchain with G-Cter in SUMO2) linkage. Positions 47–56 (SLVNESETNQ) are enriched in polar residues. The segment covering 63–91 (EAERRPPPRSESFRDKSRESLEEAAKRQD) has biased composition (basic and acidic residues). A phosphothreonine; by NLK mark is found at Thr178 and Thr189. The segment at 178-372 (TPLITYSNEH…RRWHALSREE (195 aa)) is mediates interaction with MAD2L2. Residues 295-305 (TVKQESSQSDV) are compositionally biased toward polar residues. Disordered regions lie at residues 295 to 327 (TVKQESSQSDVGSLHSSKHQDSKKEEEKKKPHI) and 397 to 418 (RDNYGKKKKRKRDKQPGETNEH). A Glycyl lysine isopeptide (Lys-Gly) (interchain with G-Cter in SUMO) cross-link involves residue Lys297. Residues 312 to 323 (KHQDSKKEEEKK) are compositionally biased toward basic and acidic residues. The segment at residues 327–395 (IKKPLNAFML…LHMQLYPGWS (69 aa)) is a DNA-binding region (HMG box). The short motif at 402-408 (KKKKRKR) is the Nuclear localization signal element.

It belongs to the TCF/LEF family. Interacts with TGFB1I1. Interacts with SPIN1. Interacts with CTNNB1 (via the armadillo repeat); forms stable transcription complex. Interacts with EP300. Interacts with NLK. Interacts with CCDC85B (probably through the HMG box); prevents interaction with CTNNB1. Interacts with TNIK. Interacts with MAD2L2; prevents TCF7L2/TCF4 binding to promZIPK/DAPK3oters, negatively modulating its transcriptional activity. Interacts with ZIPK/DAPK3. Interacts with XIAP/BIRC4 and TLE3. Interacts with DDIT3/CHOP. The CTNNB1 and TCF7L2/TCF4 complex interacts with PML (isoform PML-4). Identified in a complex with CTNNB1 and FERMT2. Interacts with C11orf84/SPINDOC in a SPIN1-dependent manner. Interacts with DAZAP2; the interaction results in localization of DAZAP2 to the nucleus. Phosphorylated at Thr-178 and/or Thr-189 by NLK. Phosphorylation by NLK at these sites inhibits DNA-binding by TCF7L2/TCF4, thereby preventing transcriptional activation of target genes of the canonical Wnt/beta-catenin signaling pathway. Post-translationally, polysumoylated. Sumoylation is enhanced by PIAS family members and desumoylation is enhanced by SENP2. Sumoylation/desumoylation regulates TCF7L2/TCF4 transcription activity in the Wnt/beta-catenin signaling pathway without altering interaction with CTNNB1 nor binding to DNA. Detected in adult brain and liver, and at lower levels in intestine, with a clear increase from the distal colon to the duodenum. Detected at low levels in heart, lung, kidney, pituitary and testis.

The protein resides in the nucleus. It localises to the PML body. In terms of biological role, participates in the Wnt signaling pathway and modulates MYC expression by binding to its promoter in a sequence-specific manner. Acts as a repressor in the absence of CTNNB1, and as activator in its presence. Activates transcription from promoters with several copies of the Tcf motif CCTTTGATC in the presence of CTNNB1. TLE1, TLE2, TLE3 and TLE4 repress transactivation mediated by TCF7L2/TCF4 and CTNNB1. Expression of dominant-negative mutants results in cell-cycle arrest in G1. Necessary for the maintenance of the epithelial stem-cell compartment of the small intestine. This is Transcription factor 7-like 2 (Tcf7l2) from Mus musculus (Mouse).